Here is a 342-residue protein sequence, read N- to C-terminus: MSQPPAAHVPVLYTQVLEGLQVTENGTYLDGTFGRGGHARGVLEHLGPGGRLLVMDKDPEAVAVSQHTFGGDARVSIHPGSFARLVQVVAAATVDGILLDLGVSSPQLDVAGRGFSFGKDGPLDMRMDPDSGQSAAGWLAQATDREIADVLWTYGEERQSRRIARAIVARRGEQPLLRTAQLADLIASVMPRGDSKTHPATRSFQAIRIHINRELADLEAGLDAALGALKPGGRLAVISFHSLEDRIVKQFMARYAKAPPSNRRLPEAQPFVPTLQLVSGAIKADDSELAVNPRARSAVLRVAEKLGMENRESGMGKGHGAAASRFPTPDSRFPTSPNGDAP.

S-adenosyl-L-methionine contacts are provided by residues 36 to 38, Asp-56, Phe-82, Asp-100, and Gln-107; that span reads GGH. Residues 309–342 are disordered; sequence ENRESGMGKGHGAAASRFPTPDSRFPTSPNGDAP. Over residues 333-342 the composition is skewed to polar residues; sequence FPTSPNGDAP.

Belongs to the methyltransferase superfamily. RsmH family.

Its subcellular location is the cytoplasm. It carries out the reaction cytidine(1402) in 16S rRNA + S-adenosyl-L-methionine = N(4)-methylcytidine(1402) in 16S rRNA + S-adenosyl-L-homocysteine + H(+). Specifically methylates the N4 position of cytidine in position 1402 (C1402) of 16S rRNA. The protein is Ribosomal RNA small subunit methyltransferase H of Xanthomonas campestris pv. campestris (strain 8004).